Here is a 263-residue protein sequence, read N- to C-terminus: 3-methyl-2-oxobutanoate hydroxymethyltransferase (263 aa).

Asp44 and Asp83 together coordinate Mg(2+). 3-methyl-2-oxobutanoate contacts are provided by residues 44 to 45 (DS), Asp83, and Lys112. Glu114 provides a ligand contact to Mg(2+). The active-site Proton acceptor is Glu181.

Belongs to the PanB family. As to quaternary structure, homodecamer; pentamer of dimers. The cofactor is Mg(2+).

It localises to the cytoplasm. The enzyme catalyses 3-methyl-2-oxobutanoate + (6R)-5,10-methylene-5,6,7,8-tetrahydrofolate + H2O = 2-dehydropantoate + (6S)-5,6,7,8-tetrahydrofolate. The protein operates within cofactor biosynthesis; (R)-pantothenate biosynthesis; (R)-pantoate from 3-methyl-2-oxobutanoate: step 1/2. In terms of biological role, catalyzes the reversible reaction in which hydroxymethyl group from 5,10-methylenetetrahydrofolate is transferred onto alpha-ketoisovalerate to form ketopantoate. The polypeptide is 3-methyl-2-oxobutanoate hydroxymethyltransferase (Sulfurimonas denitrificans (strain ATCC 33889 / DSM 1251) (Thiomicrospira denitrificans (strain ATCC 33889 / DSM 1251))).